We begin with the raw amino-acid sequence, 133 residues long: Cytochrome c-type biogenesis protein CcmE (133 aa).

Residues 1–7 (MKRKHKR) lie on the Cytoplasmic side of the membrane. The chain crosses the membrane as a helical; Signal-anchor for type II membrane protein span at residues 8–28 (LLFIIVTFIIFGSSVVIVLNK). Residues 29 to 133 (LRSNISFFFT…NYKPGKYRAK (105 aa)) are Periplasmic-facing. His-121 and Tyr-125 together coordinate heme.

Belongs to the CcmE/CycJ family.

The protein localises to the cell inner membrane. Its function is as follows. Heme chaperone required for the biogenesis of c-type cytochromes. Transiently binds heme delivered by CcmC and transfers the heme to apo-cytochromes in a process facilitated by CcmF and CcmH. This is Cytochrome c-type biogenesis protein CcmE from Ehrlichia canis (strain Jake).